We begin with the raw amino-acid sequence, 369 residues long: sn-glycerol-3-phosphate import ATP-binding protein UgpC (369 aa).

The region spanning 4-235 is the ABC transporter domain; that stretch reads LSLRNVQKTY…PASTFVAGFI (232 aa). 37–44 provides a ligand contact to ATP; the sequence is GPSGCGKS.

This sequence belongs to the ABC transporter superfamily. sn-glycerol-3-phosphate importer (TC 3.A.1.1.3) family. As to quaternary structure, the complex is composed of two ATP-binding proteins (UgpC), two transmembrane proteins (UgpA and UgpE) and a solute-binding protein (UgpB).

It localises to the cell inner membrane. It carries out the reaction sn-glycerol 3-phosphate(out) + ATP + H2O = sn-glycerol 3-phosphate(in) + ADP + phosphate + H(+). Part of the ABC transporter complex UgpBAEC involved in sn-glycerol-3-phosphate (G3P) import. Responsible for energy coupling to the transport system. The sequence is that of sn-glycerol-3-phosphate import ATP-binding protein UgpC from Cupriavidus pinatubonensis (strain JMP 134 / LMG 1197) (Cupriavidus necator (strain JMP 134)).